Consider the following 165-residue polypeptide: 2-C-methyl-D-erythritol 2,4-cyclodiphosphate synthase (165 aa).

A divalent metal cation is bound by residues Asp8 and His10. 4-CDP-2-C-methyl-D-erythritol 2-phosphate-binding positions include 8 to 10 (DVH) and 34 to 35 (HS). His42 serves as a coordination point for a divalent metal cation. Residues 56-58 (DIG), 61-65 (FPDTD), 100-106 (AQAPKMA), 132-135 (TTTE), Phe139, and Arg142 contribute to the 4-CDP-2-C-methyl-D-erythritol 2-phosphate site.

It belongs to the IspF family. Homotrimer. It depends on a divalent metal cation as a cofactor.

The catalysed reaction is 4-CDP-2-C-methyl-D-erythritol 2-phosphate = 2-C-methyl-D-erythritol 2,4-cyclic diphosphate + CMP. The protein operates within isoprenoid biosynthesis; isopentenyl diphosphate biosynthesis via DXP pathway; isopentenyl diphosphate from 1-deoxy-D-xylulose 5-phosphate: step 4/6. In terms of biological role, involved in the biosynthesis of isopentenyl diphosphate (IPP) and dimethylallyl diphosphate (DMAPP), two major building blocks of isoprenoid compounds. Catalyzes the conversion of 4-diphosphocytidyl-2-C-methyl-D-erythritol 2-phosphate (CDP-ME2P) to 2-C-methyl-D-erythritol 2,4-cyclodiphosphate (ME-CPP) with a corresponding release of cytidine 5-monophosphate (CMP). The polypeptide is 2-C-methyl-D-erythritol 2,4-cyclodiphosphate synthase (Pectobacterium atrosepticum (strain SCRI 1043 / ATCC BAA-672) (Erwinia carotovora subsp. atroseptica)).